The chain runs to 377 residues: Succinyl-diaminopimelate desuccinylase (377 aa).

His66 is a binding site for Zn(2+). The active site involves Asp68. Asp99 contacts Zn(2+). Catalysis depends on Glu133, which acts as the Proton acceptor. Zn(2+) contacts are provided by Glu134, Glu162, and His348.

This sequence belongs to the peptidase M20A family. DapE subfamily. Homodimer. Requires Zn(2+) as cofactor. The cofactor is Co(2+).

It catalyses the reaction N-succinyl-(2S,6S)-2,6-diaminopimelate + H2O = (2S,6S)-2,6-diaminopimelate + succinate. Its pathway is amino-acid biosynthesis; L-lysine biosynthesis via DAP pathway; LL-2,6-diaminopimelate from (S)-tetrahydrodipicolinate (succinylase route): step 3/3. In terms of biological role, catalyzes the hydrolysis of N-succinyl-L,L-diaminopimelic acid (SDAP), forming succinate and LL-2,6-diaminopimelate (DAP), an intermediate involved in the bacterial biosynthesis of lysine and meso-diaminopimelic acid, an essential component of bacterial cell walls. This Bordetella avium (strain 197N) protein is Succinyl-diaminopimelate desuccinylase.